Consider the following 257-residue polypeptide: Snake venom serine protease Dav-KN (257 aa).

A signal peptide spans 1–18; sequence MVLIRVLANLLILQLSYA. The propeptide occupies 19–24; sequence QKSSEL. A Peptidase S1 domain is found at 25-248; the sequence is VIGGDECNIN…HLDWIKGIIA (224 aa). Disulfide bonds link cysteine 31–cysteine 162, cysteine 49–cysteine 65, cysteine 97–cysteine 255, cysteine 173–cysteine 188, and cysteine 199–cysteine 224. Residues histidine 64 and aspartate 109 each act as charge relay system in the active site. Serine 203 acts as the Charge relay system in catalysis.

Belongs to the peptidase S1 family. Snake venom subfamily. Monomer. As to expression, expressed by the venom gland.

The protein localises to the secreted. Snake venom serine protease that may act in the hemostasis system of the prey. In Deinagkistrodon acutus (Hundred-pace snake), this protein is Snake venom serine protease Dav-KN.